Here is a 73-residue protein sequence, read N- to C-terminus: Stigmurin (73 aa).

The signal sequence occupies residues Met-1 to Ala-22. Lys-39 carries the lysine amide modification. A propeptide spanning residues Glu-45–Tyr-73 is cleaved from the precursor.

The protein belongs to the non-disulfide-bridged peptide (NDBP) superfamily. Short antimicrobial peptide (group 4) family. Expressed by the venom gland.

The protein resides in the secreted. Its function is as follows. Antimicrobial peptide with activity against Gram-positive bacterial strains (S.aureus (MIC=2-140 uM), methicillin-resistant S.aureus (MRSA) (MIC=8-17 uM), S.epidermidis (MIC=1.17 uM), and the yeasts C.albicans, C.krusei, and C.glabrata (MIC=34-69 uM)). Acts by disrupting the cell membrane (observed on outer layer of the S.aureus). Is not active against Gram-negative bacteria (E.coli, E.Cloacae, P.aeruginosa), and the Gram-positive bacterium E.faecalis. Also shows toxicity against several cell lines, but possess low hemolytic activity at the highest concentration tested. Also shows antiparasitic activity against Trypanosoma cruzi by decreasing the viability of the epimastigote and trypomastigote forms of the parasite. Displays high hydroxyl radical scavenging activity (antioxidant action). In a wound infection model, the topical application of this peptide demonstrates antibacterial effects, as well as an ability to accelerate wound closure speed, which suggests the induction of tissue repair. In the model of polymicrobial sepsis, it exhibits an antibiotic effect, reducing the levels of microorganisms in the infectious focus and the inflammatory responses in the lung and cecum of septic animals. This chain is Stigmurin, found in Tityus stigmurus (Brazilian scorpion).